We begin with the raw amino-acid sequence, 478 residues long: Putative UDP-glucose flavonoid 3-O-glucosyltransferase 3 (478 aa).

Belongs to the UDP-glycosyltransferase family.

In Fragaria ananassa (Strawberry), this protein is Putative UDP-glucose flavonoid 3-O-glucosyltransferase 3.